A 453-amino-acid polypeptide reads, in one-letter code: Serine protease HTRA3 (453 aa).

Residues 1–17 (MQARALLLAALAALALA) form the signal peptide. Positions 21–84 (PAAPCPARCD…ECVRGLCRCR (64 aa)) constitute an IGFBP N-terminal domain. Cystine bridges form between cysteine 25-cysteine 48, cysteine 29-cysteine 50, cysteine 34-cysteine 51, cysteine 39-cysteine 54, cysteine 62-cysteine 76, cysteine 70-cysteine 81, cysteine 83-cysteine 101, and cysteine 90-cysteine 126. The Kazal-like domain occupies 64–128 (GPLDSPCGES…RQLQKGACPL (65 aa)). The interval 175–340 (GSGFIMSEAG…AIPSDRITRF (166 aa)) is serine protease. Residues histidine 191, aspartate 227, and serine 305 each act as charge relay system in the active site. One can recognise a PDZ domain in the interval 359-444 (IRMRTITPSL…EVRRGNDDLL (86 aa)).

It belongs to the peptidase S1C family. Homotrimer. Interacts with TGFB1; the interaction inhibits TGFB-mediated signaling. Interacts with BMP4; the interaction inhibits BMP4-mediated signaling. Interacts with TGFB2 and GDF5. Interacts with MYH9. In terms of tissue distribution, widely expressed, with highest levels in both adult and fetal heart, ovary, uterus placenta, and bladder. In the endometrium, expressed in epithelial glands and the stroma. Also present in leukocytes. Isoform 1 is predominant in heart and skeletal muscle, whereas isoform 2 is predominant in placenta and kidney.

Its subcellular location is the secreted. In terms of biological role, serine protease that cleaves beta-casein/CSN2 as well as several extracellular matrix (ECM) proteoglycans such as decorin/DCN, biglycan/BGN and fibronectin/FN1. Inhibits signaling mediated by TGF-beta family proteins possibly indirectly by degradation of these ECM proteoglycans. May act as a tumor suppressor. Negatively regulates, in vitro, trophoblast invasion during placental development and may be involved in the development of the placenta in vivo. May also have a role in ovarian development, granulosa cell differentiation and luteinization. The polypeptide is Serine protease HTRA3 (HTRA3) (Homo sapiens (Human)).